Here is a 181-residue protein sequence, read N- to C-terminus: uncharacterized protein (181 aa).

Positions 1–23 (MKKCLLFLTTIALILSLSTNAFA) are cleaved as a signal peptide.

This is an uncharacterized protein from Bacillus subtilis (strain 168).